Consider the following 355-residue polypeptide: F-box only protein 32 (355 aa).

Residues 62-67 (KKRKKD) carry the Nuclear localization signal motif. Residues 169 to 173 (LLQTL) carry the Nuclear export signal motif. An F-box domain is found at 223–271 (LTFTDLPLCLQLNIMQRLSDGRDLVSLGQAAPDLHVLSEDRLLWKKLCQ). The Bipartite nuclear localization signal signature appears at 280–295 (RKRLILSDKGQLDWKK).

Part of the SCF (SKP1-CUL1-F-box) E3 ubiquitin-protein ligase complex SCF(FBXO32) formed of CUL1, SKP1, RBX1 and FBXO32. Specifically expressed in cardiac and skeletal muscle.

Its subcellular location is the cytoplasm. The protein resides in the nucleus. It participates in protein modification; protein ubiquitination. In terms of biological role, substrate recognition component of a SCF (SKP1-CUL1-F-box protein) E3 ubiquitin-protein ligase complex which mediates the ubiquitination and subsequent proteasomal degradation of target proteins. Probably recognizes and binds to phosphorylated target proteins during skeletal muscle atrophy. Recognizes TERF1. The protein is F-box only protein 32 (FBXO32) of Homo sapiens (Human).